We begin with the raw amino-acid sequence, 543 residues long: CTP synthase (543 aa).

The amidoligase domain stretch occupies residues 1-267 (MTKYVFVTGG…ATQVLNLLNL (267 aa)). S13 contributes to the CTP binding site. S13 is a UTP binding site. Residues 14–19 (SIGKGI) and D71 contribute to the ATP site. Mg(2+) contacts are provided by D71 and E141. Residues 148 to 150 (DIE), 188 to 193 (KTKPTQ), and K224 each bind CTP. UTP is bound by residues 188–193 (KTKPTQ) and K224. The region spanning 292–534 (EVAIVGKYVR…LAAAAKNSNR (243 aa)) is the Glutamine amidotransferase type-1 domain. Residue G354 coordinates L-glutamine. C381 functions as the Nucleophile; for glutamine hydrolysis in the catalytic mechanism. Residues 382–385 (LGMQ), E405, and R462 contribute to the L-glutamine site. Catalysis depends on residues H507 and E509.

The protein belongs to the CTP synthase family. In terms of assembly, homotetramer.

The catalysed reaction is UTP + L-glutamine + ATP + H2O = CTP + L-glutamate + ADP + phosphate + 2 H(+). The enzyme catalyses L-glutamine + H2O = L-glutamate + NH4(+). It catalyses the reaction UTP + NH4(+) + ATP = CTP + ADP + phosphate + 2 H(+). It functions in the pathway pyrimidine metabolism; CTP biosynthesis via de novo pathway; CTP from UDP: step 2/2. With respect to regulation, allosterically activated by GTP, when glutamine is the substrate; GTP has no effect on the reaction when ammonia is the substrate. The allosteric effector GTP functions by stabilizing the protein conformation that binds the tetrahedral intermediate(s) formed during glutamine hydrolysis. Inhibited by the product CTP, via allosteric rather than competitive inhibition. Catalyzes the ATP-dependent amination of UTP to CTP with either L-glutamine or ammonia as the source of nitrogen. Regulates intracellular CTP levels through interactions with the four ribonucleotide triphosphates. This chain is CTP synthase, found in Thermosynechococcus vestitus (strain NIES-2133 / IAM M-273 / BP-1).